The chain runs to 115 residues: Peptidyl-tRNA hydrolase (115 aa).

Belongs to the PTH2 family.

Its subcellular location is the cytoplasm. It carries out the reaction an N-acyl-L-alpha-aminoacyl-tRNA + H2O = an N-acyl-L-amino acid + a tRNA + H(+). In terms of biological role, the natural substrate for this enzyme may be peptidyl-tRNAs which drop off the ribosome during protein synthesis. This Methanocaldococcus jannaschii (strain ATCC 43067 / DSM 2661 / JAL-1 / JCM 10045 / NBRC 100440) (Methanococcus jannaschii) protein is Peptidyl-tRNA hydrolase.